A 240-amino-acid polypeptide reads, in one-letter code: Purine nucleoside phosphorylase DeoD-type (240 aa).

Residue His5 participates in a purine D-ribonucleoside binding. Residues Gly21, Arg25, Arg44, and 88 to 91 (RVGS) contribute to the phosphate site. A purine D-ribonucleoside contacts are provided by residues 181–183 (EME) and 205–206 (SD). Asp206 (proton donor) is an active-site residue.

It belongs to the PNP/UDP phosphorylase family. In terms of assembly, homohexamer; trimer of homodimers.

The enzyme catalyses a purine D-ribonucleoside + phosphate = a purine nucleobase + alpha-D-ribose 1-phosphate. The catalysed reaction is a purine 2'-deoxy-D-ribonucleoside + phosphate = a purine nucleobase + 2-deoxy-alpha-D-ribose 1-phosphate. Its function is as follows. Catalyzes the reversible phosphorolytic breakdown of the N-glycosidic bond in the beta-(deoxy)ribonucleoside molecules, with the formation of the corresponding free purine bases and pentose-1-phosphate. The polypeptide is Purine nucleoside phosphorylase DeoD-type (Enterobacter sp. (strain 638)).